We begin with the raw amino-acid sequence, 108 residues long: UPF0145 protein LACR_1006 (108 aa).

This sequence belongs to the UPF0145 family.

The chain is UPF0145 protein LACR_1006 from Lactococcus lactis subsp. cremoris (strain SK11).